Reading from the N-terminus, the 356-residue chain is UDP-N-acetylglucosamine--N-acetylmuramyl-(pentapeptide) pyrophosphoryl-undecaprenol N-acetylglucosamine transferase (356 aa).

Residues 11–13 (TGG), Asn-117, Arg-160, Ser-188, and Gln-290 contribute to the UDP-N-acetyl-alpha-D-glucosamine site.

It belongs to the glycosyltransferase 28 family. MurG subfamily.

It localises to the cell inner membrane. The catalysed reaction is di-trans,octa-cis-undecaprenyl diphospho-N-acetyl-alpha-D-muramoyl-L-alanyl-D-glutamyl-meso-2,6-diaminopimeloyl-D-alanyl-D-alanine + UDP-N-acetyl-alpha-D-glucosamine = di-trans,octa-cis-undecaprenyl diphospho-[N-acetyl-alpha-D-glucosaminyl-(1-&gt;4)]-N-acetyl-alpha-D-muramoyl-L-alanyl-D-glutamyl-meso-2,6-diaminopimeloyl-D-alanyl-D-alanine + UDP + H(+). The protein operates within cell wall biogenesis; peptidoglycan biosynthesis. Cell wall formation. Catalyzes the transfer of a GlcNAc subunit on undecaprenyl-pyrophosphoryl-MurNAc-pentapeptide (lipid intermediate I) to form undecaprenyl-pyrophosphoryl-MurNAc-(pentapeptide)GlcNAc (lipid intermediate II). The sequence is that of UDP-N-acetylglucosamine--N-acetylmuramyl-(pentapeptide) pyrophosphoryl-undecaprenol N-acetylglucosamine transferase from Rickettsia bellii (strain RML369-C).